We begin with the raw amino-acid sequence, 288 residues long: NAD kinase (288 aa).

Residue Asp73 is the Proton acceptor of the active site. NAD(+) is bound by residues 73-74 (DG), Arg78, 144-145 (NE), Asp174, 185-190 (TAYSLS), and Ala209.

It belongs to the NAD kinase family. A divalent metal cation serves as cofactor.

Its subcellular location is the cytoplasm. The catalysed reaction is NAD(+) + ATP = ADP + NADP(+) + H(+). Its function is as follows. Involved in the regulation of the intracellular balance of NAD and NADP, and is a key enzyme in the biosynthesis of NADP. Catalyzes specifically the phosphorylation on 2'-hydroxyl of the adenosine moiety of NAD to yield NADP. This chain is NAD kinase, found in Porphyromonas gingivalis (strain ATCC 33277 / DSM 20709 / CIP 103683 / JCM 12257 / NCTC 11834 / 2561).